The sequence spans 455 residues: Putative FBD-associated F-box protein At5g56400 (455 aa).

Positions valine 32–arginine 81 constitute an F-box domain. Residues tryptophan 372–serine 421 form the FBD domain.

In Arabidopsis thaliana (Mouse-ear cress), this protein is Putative FBD-associated F-box protein At5g56400.